The chain runs to 449 residues: Keratin, type I cuticular Ha7 (449 aa).

The tract at residues 1–104 is head; it reads MTSFYSTSSC…YGKNTLNGHE (104 aa). Positions 104 to 415 constitute an IF rod domain; sequence EKETMKFLND…NLLESEDCKL (312 aa). Positions 105–139 are coil 1A; the sequence is KETMKFLNDRLANYLEKVRQLEQENAELETTLLER. The segment at 140 to 150 is linker 1; that stretch reads SKCHESTVCPD. Residues 151 to 251 form a coil 1B region; the sequence is YQSYFRTIEE…HEQEVKILRS (101 aa). The segment at 252–267 is linker 12; sequence QLGEKFRIELDIEPTI. Positions 268-411 are coil 2; sequence DLNRVLGEMR…ATYRNLLESE (144 aa). Positions 416-449 are tail; the sequence is PCNPCSTPASCTSCPSCGPVTGGSPSGHGASMGR.

It belongs to the intermediate filament family.

This chain is Keratin, type I cuticular Ha7 (KRT37), found in Homo sapiens (Human).